The primary structure comprises 341 residues: Eukaryotic translation initiation factor 2 subunit 1 (341 aa).

Positions Glu16–Arg87 constitute an S1 motif domain. At Ser51 the chain carries Phosphoserine. The tract at residues Ala293–Asp341 is disordered. The span at Gly300 to Asp309 shows a compositional bias: acidic residues.

Belongs to the eIF-2-alpha family. In terms of assembly, eukaryotic translation initiation factor 2 eIF2 is a heterotrimeric complex composed of an alpha, a beta and a gamma subunit. Phosphorylation of eIF-2-alpha impairs the recycling of eIF-2 between successive rounds of initiation and thus leads to inhibition of translation.

Its subcellular location is the cytoplasm. It is found in the cytosol. Functionally, eIF-2 functions in the early steps of protein synthesis by forming a ternary complex with GTP and initiator tRNA. This pre-initiation complex mediates ribosomal recognition of a start codon during the scanning process of the leader region. The protein is Eukaryotic translation initiation factor 2 subunit 1 of Drosophila melanogaster (Fruit fly).